Reading from the N-terminus, the 130-residue chain is Small ribosomal subunit protein uS12c (130 aa).

Belongs to the universal ribosomal protein uS12 family. In terms of assembly, part of the 30S ribosomal subunit.

The protein resides in the plastid. It localises to the chloroplast. With S4 and S5 plays an important role in translational accuracy. Located at the interface of the 30S and 50S subunits. This is Small ribosomal subunit protein uS12c (rps12) from Tetradesmus obliquus (Green alga).